The primary structure comprises 25 residues: Caerin-1.18 (25 aa).

At leucine 25 the chain carries Leucine amide.

In terms of tissue distribution, expressed by the skin dorsal glands.

It localises to the secreted. In terms of biological role, shows significant activity against Gram-positive organisms, but is less effective against Gram-negative organisms. The sequence is that of Caerin-1.18 from Ranoidea gracilenta (Dainty green tree frog).